We begin with the raw amino-acid sequence, 106 residues long: Putative double-stranded DNA mimic protein VIBHAR_02752 (106 aa).

Belongs to the putative dsDNA mimic protein family.

May act as a double-stranded DNA (dsDNA) mimic. Probably regulates the activity of a dsDNA-binding protein. The chain is Putative double-stranded DNA mimic protein VIBHAR_02752 from Vibrio campbellii (strain ATCC BAA-1116).